The primary structure comprises 162 residues: Protein-export protein SecB (162 aa).

Belongs to the SecB family. In terms of assembly, homotetramer, a dimer of dimers. One homotetramer interacts with 1 SecA dimer.

It localises to the cytoplasm. Functionally, one of the proteins required for the normal export of preproteins out of the cell cytoplasm. It is a molecular chaperone that binds to a subset of precursor proteins, maintaining them in a translocation-competent state. It also specifically binds to its receptor SecA. The sequence is that of Protein-export protein SecB from Legionella pneumophila (strain Paris).